The sequence spans 287 residues: DDRGK domain-containing protein 1 (287 aa).

The Lumenal portion of the chain corresponds to 1–5 (MDLIL). A helical membrane pass occupies residues 6-26 (LLGIAVALLVILVTLFFFTKG). Over 27 to 287 (KGSQESGKYN…LINLVPVSAE (261 aa)) the chain is Cytoplasmic. Disordered regions lie at residues 28-102 (GSQE…KRAK) and 135-164 (KVEA…RQEH). The segment covering 44 to 68 (AQAAPRRAQVVRNQRNRARVAAAPA) has biased composition (low complexity). Over residues 85–102 (IPHADFNGEKMGAKKRAK) the composition is skewed to basic and acidic residues.

Belongs to the DDRGK1 family. In terms of assembly, interacts with Atg9; the interaction is transient.

It is found in the endoplasmic reticulum membrane. Substrate adapter for ufmylation, the covalent attachment of the ubiquitin-like modifier UFM1 to substrate proteins. Required for ufmylation of Atg9; protects the nervous system during aging, possibly by stabilizing Atg9 and supporting its function. This is DDRGK domain-containing protein 1 from Culex quinquefasciatus (Southern house mosquito).